The sequence spans 415 residues: Phosphoribosylamine--glycine ligase (415 aa).

The region spanning 108–311 (KKIMEKYNIP…LMQHIIDLDE (204 aa)) is the ATP-grasp domain. Position 134-191 (134-191 (IENCELPVVVKKDGLAAGKGVIIADTIEAARSAIEIMYGDEEEGTVVFETFLEGEEFS)) interacts with ATP. Positions 281 and 283 each coordinate Mg(2+).

This sequence belongs to the GARS family. Requires Mg(2+) as cofactor. Mn(2+) is required as a cofactor.

The catalysed reaction is 5-phospho-beta-D-ribosylamine + glycine + ATP = N(1)-(5-phospho-beta-D-ribosyl)glycinamide + ADP + phosphate + H(+). Its pathway is purine metabolism; IMP biosynthesis via de novo pathway; N(1)-(5-phospho-D-ribosyl)glycinamide from 5-phospho-alpha-D-ribose 1-diphosphate: step 2/2. This is Phosphoribosylamine--glycine ligase from Staphylococcus aureus (strain COL).